Consider the following 265-residue polypeptide: Tryptophan synthase alpha chain (265 aa).

Active-site proton acceptor residues include glutamate 49 and aspartate 60.

This sequence belongs to the TrpA family. In terms of assembly, tetramer of two alpha and two beta chains.

It catalyses the reaction (1S,2R)-1-C-(indol-3-yl)glycerol 3-phosphate + L-serine = D-glyceraldehyde 3-phosphate + L-tryptophan + H2O. It functions in the pathway amino-acid biosynthesis; L-tryptophan biosynthesis; L-tryptophan from chorismate: step 5/5. The alpha subunit is responsible for the aldol cleavage of indoleglycerol phosphate to indole and glyceraldehyde 3-phosphate. The chain is Tryptophan synthase alpha chain from Cupriavidus metallidurans (strain ATCC 43123 / DSM 2839 / NBRC 102507 / CH34) (Ralstonia metallidurans).